We begin with the raw amino-acid sequence, 530 residues long: T-complex protein 1 subunit zeta (530 aa).

G38 contributes to the ADP binding site. G38 contacts ATP. A Mg(2+)-binding site is contributed by D89. ADP is bound by residues G90, T91, T92, S93, T157, K158, and A410. The ATP site is built by G90, T91, and T92. Residues A410, G411, D495, and K500 each coordinate ATP. D495 lines the ADP pocket.

In terms of assembly, component of the chaperonin-containing T-complex (TRiC), a hexadecamer composed of two identical back-to-back stacked rings enclosing a protein folding chamber. Each ring is made up of eight different subunits: TCP1/CCT1, CCT2, CCT3, CCT4, CCT5, CCT6A/CCT6, CCT7, CCT8. Interacts with PACRG.

The protein localises to the cytoplasm. It catalyses the reaction ATP + H2O = ADP + phosphate + H(+). Functionally, component of the chaperonin-containing T-complex (TRiC), a molecular chaperone complex that assists the folding of actin, tubulin and other proteins upon ATP hydrolysis. This chain is T-complex protein 1 subunit zeta, found in Gallus gallus (Chicken).